Reading from the N-terminus, the 377-residue chain is NADH dehydrogenase [ubiquinone] 1 alpha subcomplex subunit 9, mitochondrial (377 aa).

Residues 1-35 (MAAAVRFQVVRALPMSRPAISAAATSVFCSSSHRQ) constitute a mitochondrion transit peptide. N6-succinyllysine is present on lysine 175. N6-acetyllysine occurs at positions 189 and 370.

This sequence belongs to the complex I NDUFA9 subunit family. As to quaternary structure, complex I is composed of 45 different subunits. This a component of the hydrophobic protein fraction. Interacts with BLOC1S1. Interacts with SLC2A4. Interacts with CLOCK. Interacts with RAB5IF. The cofactor is FAD. In terms of processing, acetylated on lysine residues. BLOC1S1 is required for acetylation. Acetylated by CLOCK in a circadian manner. As to expression, expressed by the principal cells of the epididymis. Detected in flagella of epididymal sperm (at protein level).

The protein localises to the mitochondrion matrix. Functionally, accessory subunit of the mitochondrial membrane respiratory chain NADH dehydrogenase (Complex I), that is believed not to be involved in catalysis. Complex I functions in the transfer of electrons from NADH to the respiratory chain. The immediate electron acceptor for the enzyme is believed to be ubiquinone. This chain is NADH dehydrogenase [ubiquinone] 1 alpha subcomplex subunit 9, mitochondrial, found in Rattus norvegicus (Rat).